The sequence spans 421 residues: UDP-N-acetylglucosamine 1-carboxyvinyltransferase (421 aa).

Phosphoenolpyruvate is bound at residue 22-23 (KN). Arg92 contributes to the UDP-N-acetyl-alpha-D-glucosamine binding site. Cys116 acts as the Proton donor in catalysis. A 2-(S-cysteinyl)pyruvic acid O-phosphothioketal modification is found at Cys116. Residues 121–125 (RPVDQ), Asp304, and Ile326 each bind UDP-N-acetyl-alpha-D-glucosamine.

Belongs to the EPSP synthase family. MurA subfamily.

Its subcellular location is the cytoplasm. The catalysed reaction is phosphoenolpyruvate + UDP-N-acetyl-alpha-D-glucosamine = UDP-N-acetyl-3-O-(1-carboxyvinyl)-alpha-D-glucosamine + phosphate. Its pathway is cell wall biogenesis; peptidoglycan biosynthesis. Cell wall formation. Adds enolpyruvyl to UDP-N-acetylglucosamine. The sequence is that of UDP-N-acetylglucosamine 1-carboxyvinyltransferase from Bordetella avium (strain 197N).